Here is a 173-residue protein sequence, read N- to C-terminus: Photosystem I assembly protein Ycf3 (173 aa).

3 TPR repeats span residues 35–68 (AYVY…EDNP), 72–105 (GETL…NSNQ), and 120–153 (GRIA…NPGG).

The protein belongs to the Ycf3 family.

The protein resides in the cellular thylakoid membrane. In terms of biological role, essential for the assembly of the photosystem I (PSI) complex. May act as a chaperone-like factor to guide the assembly of the PSI subunits. In Parasynechococcus marenigrum (strain WH8102), this protein is Photosystem I assembly protein Ycf3.